Reading from the N-terminus, the 88-residue chain is Large ribosomal subunit protein bL27 (88 aa).

The tract at residues 1-21 is disordered; it reads MAHKKGQGSTQNNRDSAGRRL.

The protein belongs to the bacterial ribosomal protein bL27 family.

This Helicobacter acinonychis (strain Sheeba) protein is Large ribosomal subunit protein bL27.